The sequence spans 299 residues: 4-diphosphocytidyl-2-C-methyl-D-erythritol kinase (299 aa).

The active site involves lysine 18. 104–114 (PIASGIGGGSS) contributes to the ATP binding site. Residue aspartate 146 is part of the active site.

It belongs to the GHMP kinase family. IspE subfamily.

The catalysed reaction is 4-CDP-2-C-methyl-D-erythritol + ATP = 4-CDP-2-C-methyl-D-erythritol 2-phosphate + ADP + H(+). It functions in the pathway isoprenoid biosynthesis; isopentenyl diphosphate biosynthesis via DXP pathway; isopentenyl diphosphate from 1-deoxy-D-xylulose 5-phosphate: step 3/6. Its function is as follows. Catalyzes the phosphorylation of the position 2 hydroxy group of 4-diphosphocytidyl-2C-methyl-D-erythritol. The protein is 4-diphosphocytidyl-2-C-methyl-D-erythritol kinase of Brucella melitensis biotype 1 (strain ATCC 23456 / CCUG 17765 / NCTC 10094 / 16M).